We begin with the raw amino-acid sequence, 152 residues long: Putative aluminum-activated malate transporter 11 (152 aa).

2 helical membrane passes run 48–68 and 78–98; these read VIHA…YFME and AIWA…VEGL.

It belongs to the aromatic acid exporter (TC 2.A.85) family.

The protein localises to the membrane. Functionally, malate transporter. This is Putative aluminum-activated malate transporter 11 (ALMT11) from Arabidopsis thaliana (Mouse-ear cress).